Here is a 626-residue protein sequence, read N- to C-terminus: Chaperone protein HtpG (626 aa).

An a; substrate-binding region spans residues 1–331 (MSETVERHEF…TDDLPLNVSR (331 aa)). The segment at 332–544 (EMLQSTPTLQ…GMGPDLQMQR (213 aa)) is b. The interval 545 to 626 (LLRRAGRGFG…GTAAKPAGSA (82 aa)) is c.

The protein belongs to the heat shock protein 90 family. In terms of assembly, homodimer.

Its subcellular location is the cytoplasm. Molecular chaperone. Has ATPase activity. The chain is Chaperone protein HtpG from Methylorubrum extorquens (strain CM4 / NCIMB 13688) (Methylobacterium extorquens).